The following is a 285-amino-acid chain: Acetyl-coenzyme A carboxylase carboxyl transferase subunit beta (285 aa).

Positions 33 to 285 (MWIKCSKCGK…TLGNILRMHS (253 aa)) constitute a CoA carboxyltransferase N-terminal domain. Residues C37, C40, C56, and C59 each contribute to the Zn(2+) site. The C4-type zinc finger occupies 37-59 (CSKCGKILYKSDVDDNFKVCPKC).

Belongs to the AccD/PCCB family. In terms of assembly, acetyl-CoA carboxylase is a heterohexamer composed of biotin carboxyl carrier protein (AccB), biotin carboxylase (AccC) and two subunits each of ACCase subunit alpha (AccA) and ACCase subunit beta (AccD). Zn(2+) serves as cofactor.

Its subcellular location is the cytoplasm. It catalyses the reaction N(6)-carboxybiotinyl-L-lysyl-[protein] + acetyl-CoA = N(6)-biotinyl-L-lysyl-[protein] + malonyl-CoA. It participates in lipid metabolism; malonyl-CoA biosynthesis; malonyl-CoA from acetyl-CoA: step 1/1. Functionally, component of the acetyl coenzyme A carboxylase (ACC) complex. Biotin carboxylase (BC) catalyzes the carboxylation of biotin on its carrier protein (BCCP) and then the CO(2) group is transferred by the transcarboxylase to acetyl-CoA to form malonyl-CoA. This is Acetyl-coenzyme A carboxylase carboxyl transferase subunit beta from Clostridium acetobutylicum (strain ATCC 824 / DSM 792 / JCM 1419 / IAM 19013 / LMG 5710 / NBRC 13948 / NRRL B-527 / VKM B-1787 / 2291 / W).